The chain runs to 123 residues: Small ribosomal subunit protein uS12 (123 aa).

D89 is subject to 3-methylthioaspartic acid. The interval 104–123 (TAGVKDRKQARSKYGAKRPK) is disordered. Over residues 113–123 (ARSKYGAKRPK) the composition is skewed to basic residues.

Belongs to the universal ribosomal protein uS12 family. In terms of assembly, part of the 30S ribosomal subunit. Contacts proteins S8 and S17. May interact with IF1 in the 30S initiation complex.

Functionally, with S4 and S5 plays an important role in translational accuracy. In terms of biological role, interacts with and stabilizes bases of the 16S rRNA that are involved in tRNA selection in the A site and with the mRNA backbone. Located at the interface of the 30S and 50S subunits, it traverses the body of the 30S subunit contacting proteins on the other side and probably holding the rRNA structure together. The combined cluster of proteins S8, S12 and S17 appears to hold together the shoulder and platform of the 30S subunit. The polypeptide is Small ribosomal subunit protein uS12 (Neisseria gonorrhoeae (strain ATCC 700825 / FA 1090)).